Here is a 285-residue protein sequence, read N- to C-terminus: Bifunctional protein FolD 2 (285 aa).

NADP(+) is bound by residues 164–166 (GRS), Ser-189, and Val-230.

This sequence belongs to the tetrahydrofolate dehydrogenase/cyclohydrolase family. As to quaternary structure, homodimer.

The enzyme catalyses (6R)-5,10-methylene-5,6,7,8-tetrahydrofolate + NADP(+) = (6R)-5,10-methenyltetrahydrofolate + NADPH. It carries out the reaction (6R)-5,10-methenyltetrahydrofolate + H2O = (6R)-10-formyltetrahydrofolate + H(+). Its pathway is one-carbon metabolism; tetrahydrofolate interconversion. Functionally, catalyzes the oxidation of 5,10-methylenetetrahydrofolate to 5,10-methenyltetrahydrofolate and then the hydrolysis of 5,10-methenyltetrahydrofolate to 10-formyltetrahydrofolate. The chain is Bifunctional protein FolD 2 from Geobacter sulfurreducens (strain ATCC 51573 / DSM 12127 / PCA).